The chain runs to 407 residues: Probable peptidoglycan glycosyltransferase FtsW (407 aa).

Residues 1–25 are Cytoplasmic-facing; that stretch reads MSIDFRNIIKPYPSPIITGRGIDLD. Residues 26-46 form a helical membrane-spanning segment; the sequence is FPMLAGCLALLGLGLVMITSA. Over 47 to 65 the chain is Periplasmic; it reads SSEVAAVQSGNTLYMMIRH. The chain crosses the membrane as a helical span at residues 66–86; sequence LVYLVIGLGACIVTMMIPIAT. Residues 87-89 lie on the Cytoplasmic side of the membrane; sequence WQR. A helical transmembrane segment spans residues 90-110; it reads LGWLMLIGAFGLLIMVILPGI. The Periplasmic segment spans residues 111–119; sequence GREVNGSMR. A helical membrane pass occupies residues 120–140; it reads WIGFGAFNVQPSEIAKVFVVI. The Cytoplasmic portion of the chain corresponds to 141–155; that stretch reads YLAGYLVRRQKEVRE. Residues 156–176 form a helical membrane-spanning segment; sequence SWMGFFKPFIVLLPMAGLLLM. Topologically, residues 177–181 are periplasmic; that stretch reads EPDFG. Residues 182-202 form a helical membrane-spanning segment; the sequence is ATVVMMGAAAAMLFLGGVGLF. Arginine 203 is a topological domain (cytoplasmic). A helical membrane pass occupies residues 204-224; the sequence is FTLMVVLAVAAVTVLVQAQPY. Residues 225–283 lie on the Periplasmic side of the membrane; sequence RMARLITFTDPWSDQFGSGYQLTQALIAFGRGEWLGVGLGNSVQKQFYLPEAHTDFVFS. The chain crosses the membrane as a helical span at residues 284–304; the sequence is VLAEELGVVGSLCTVALFVFV. The Cytoplasmic segment spans residues 305–321; sequence CVRGMYIGMWAEKAKQY. A helical transmembrane segment spans residues 322 to 342; it reads FAAYVAYGLSFLWIGQFLINI. At 343-355 the chain is on the periplasmic side; sequence GVNVGLLPTKGLT. Residues 356–376 form a helical membrane-spanning segment; sequence LPFLSYGGSSLVICCACLGLL. The Cytoplasmic portion of the chain corresponds to 377 to 407; that stretch reads LRIEWESRTHLGSEEMEFSESDFAEEPTHGR.

Belongs to the SEDS family. FtsW subfamily.

The protein localises to the cell inner membrane. The enzyme catalyses [GlcNAc-(1-&gt;4)-Mur2Ac(oyl-L-Ala-gamma-D-Glu-L-Lys-D-Ala-D-Ala)](n)-di-trans,octa-cis-undecaprenyl diphosphate + beta-D-GlcNAc-(1-&gt;4)-Mur2Ac(oyl-L-Ala-gamma-D-Glu-L-Lys-D-Ala-D-Ala)-di-trans,octa-cis-undecaprenyl diphosphate = [GlcNAc-(1-&gt;4)-Mur2Ac(oyl-L-Ala-gamma-D-Glu-L-Lys-D-Ala-D-Ala)](n+1)-di-trans,octa-cis-undecaprenyl diphosphate + di-trans,octa-cis-undecaprenyl diphosphate + H(+). Its pathway is cell wall biogenesis; peptidoglycan biosynthesis. Functionally, peptidoglycan polymerase that is essential for cell division. The protein is Probable peptidoglycan glycosyltransferase FtsW of Pseudomonas fluorescens (strain SBW25).